The sequence spans 154 residues: Deoxyuridine 5'-triphosphate nucleotidohydrolase (154 aa).

Substrate contacts are provided by residues 64–66, Asn-77, 81–83, and Lys-91; these read RSG and TID.

This sequence belongs to the dUTPase family. As to quaternary structure, homotrimer. The cofactor is Mg(2+).

The catalysed reaction is dUTP + H2O = dUMP + diphosphate + H(+). It functions in the pathway pyrimidine metabolism; dUMP biosynthesis; dUMP from dCTP (dUTP route): step 2/2. Its function is as follows. This enzyme is involved in nucleotide metabolism: it produces dUMP, the immediate precursor of thymidine nucleotides and it decreases the intracellular concentration of dUTP so that uracil cannot be incorporated into DNA. The chain is Deoxyuridine 5'-triphosphate nucleotidohydrolase from Mycobacterium sp. (strain JLS).